A 232-amino-acid polypeptide reads, in one-letter code: Large ribosomal subunit protein uL1 (232 aa).

It belongs to the universal ribosomal protein uL1 family. Part of the 50S ribosomal subunit.

Functionally, binds directly to 23S rRNA. The L1 stalk is quite mobile in the ribosome, and is involved in E site tRNA release. Its function is as follows. Protein L1 is also a translational repressor protein, it controls the translation of the L11 operon by binding to its mRNA. The polypeptide is Large ribosomal subunit protein uL1 (Hahella chejuensis (strain KCTC 2396)).